The following is a 407-amino-acid chain: Peptidase T (407 aa).

His82 lines the Zn(2+) pocket. Residue Asp84 is part of the active site. Zn(2+) is bound at residue Asp143. The active-site Proton acceptor is the Glu177. Zn(2+) is bound by residues Glu178, Asp200, and His382.

This sequence belongs to the peptidase M20B family. Zn(2+) is required as a cofactor.

It is found in the cytoplasm. The enzyme catalyses Release of the N-terminal residue from a tripeptide.. Its function is as follows. Cleaves the N-terminal amino acid of tripeptides. The protein is Peptidase T of Streptococcus pyogenes serotype M1.